Reading from the N-terminus, the 277-residue chain is Pristinamycin IIA synthase subunit B (277 aa).

As to quaternary structure, heterodimer of two subunits, SnaA and SnaB. It depends on FMN as a cofactor.

Catalyzes the oxidation of the proline residue of pristinamycin IIB (PIIB) to pristinamycin IIA (PIIA). The polypeptide is Pristinamycin IIA synthase subunit B (snaB) (Streptomyces pristinaespiralis).